Reading from the N-terminus, the 271-residue chain is Thiazole synthase (271 aa).

Residue Lys104 is the Schiff-base intermediate with DXP of the active site. 1-deoxy-D-xylulose 5-phosphate is bound by residues Gly165, 192-193 (AG), and 214-215 (NT).

It belongs to the ThiG family. Homotetramer. Forms heterodimers with either ThiH or ThiS.

Its subcellular location is the cytoplasm. The catalysed reaction is [ThiS sulfur-carrier protein]-C-terminal-Gly-aminoethanethioate + 2-iminoacetate + 1-deoxy-D-xylulose 5-phosphate = [ThiS sulfur-carrier protein]-C-terminal Gly-Gly + 2-[(2R,5Z)-2-carboxy-4-methylthiazol-5(2H)-ylidene]ethyl phosphate + 2 H2O + H(+). It functions in the pathway cofactor biosynthesis; thiamine diphosphate biosynthesis. Functionally, catalyzes the rearrangement of 1-deoxy-D-xylulose 5-phosphate (DXP) to produce the thiazole phosphate moiety of thiamine. Sulfur is provided by the thiocarboxylate moiety of the carrier protein ThiS. In vitro, sulfur can be provided by H(2)S. The polypeptide is Thiazole synthase (Burkholderia lata (strain ATCC 17760 / DSM 23089 / LMG 22485 / NCIMB 9086 / R18194 / 383)).